A 199-amino-acid chain; its full sequence is MAKSAEVKLAIFGRAGVGKSALVVRFLTKRFIWEYDPTLESTYRHQATIDDEVVTMEILDTAGQEDTIQREGHMRWGEGFVLVYDITDRGSFEEVLPLKNILDEIKKPKNVTLILVGNKADLDHSRQVSTEEGEKLATELACAFYECSACTGEGNITEIFYELCREVRRRRMVQGKTRRRSSTTHVKQAINKMLTKISS.

GTP contacts are provided by residues 13 to 20 (GRAGVGKS), 60 to 64 (DTAGQ), and 118 to 121 (NKAD).

This sequence belongs to the small GTPase superfamily. Ras family.

The protein resides in the cytoplasm. It carries out the reaction GTP + H2O = GDP + phosphate + H(+). Binds GDP/GTP and possesses intrinsic GTPase activity. Has higher affinity for GDP than for GTP. This is Ras-related and estrogen-regulated growth inhibitor (RERG) from Bos taurus (Bovine).